The sequence spans 481 residues: NADH-quinone oxidoreductase subunit N (481 aa).

14 helical membrane passes run 11–31, 38–58, 74–94, 103–123, 128–148, 163–183, 208–228, 241–261, 272–292, 300–322, 332–352, 368–388, 404–424, and 450–470; these read ALPE…DLWA, WTHY…LAVW, GMSR…FVYA, IFKG…SVMV, FLTA…LIAL, FVLG…VYGA, LGLV…PFHM, VTAL…FRIL, WSLM…LAAI, MLAY…GAVG, TYAL…DGDN, VWLA…PPLM, GYVW…FYYL, and SLLS…QTVI.

This sequence belongs to the complex I subunit 2 family. In terms of assembly, NDH-1 is composed of 14 different subunits. Subunits NuoA, H, J, K, L, M, N constitute the membrane sector of the complex.

Its subcellular location is the cell inner membrane. The enzyme catalyses a quinone + NADH + 5 H(+)(in) = a quinol + NAD(+) + 4 H(+)(out). Functionally, NDH-1 shuttles electrons from NADH, via FMN and iron-sulfur (Fe-S) centers, to quinones in the respiratory chain. The immediate electron acceptor for the enzyme in this species is believed to be ubiquinone. Couples the redox reaction to proton translocation (for every two electrons transferred, four hydrogen ions are translocated across the cytoplasmic membrane), and thus conserves the redox energy in a proton gradient. The chain is NADH-quinone oxidoreductase subunit N from Neisseria gonorrhoeae (strain ATCC 700825 / FA 1090).